The following is a 176-amino-acid chain: ATP-dependent protease subunit HslV (176 aa).

Residue threonine 4 is part of the active site. Positions 158, 161, and 164 each coordinate Na(+).

This sequence belongs to the peptidase T1B family. HslV subfamily. As to quaternary structure, a double ring-shaped homohexamer of HslV is capped on each side by a ring-shaped HslU homohexamer. The assembly of the HslU/HslV complex is dependent on binding of ATP.

It is found in the cytoplasm. It catalyses the reaction ATP-dependent cleavage of peptide bonds with broad specificity.. Allosterically activated by HslU binding. In terms of biological role, protease subunit of a proteasome-like degradation complex believed to be a general protein degrading machinery. The protein is ATP-dependent protease subunit HslV of Rhizobium meliloti (strain 1021) (Ensifer meliloti).